We begin with the raw amino-acid sequence, 260 residues long: MVLDEIVRHKKKEVEEKKRIKPVEELINEIKGGYSGNFKKVLQKEGISIIGEIKKASPSKGIIKEDFDSVKIAKVYEKVDVDAISVLTEKEFFKGDDNYIREVKKVSSKPILRKDFIVDEYQIYESKILGADAVLLIVSVLGDKLRDFYNLSKSVGLDVLVEIHDRQQLEIALEAGCDIIGINNRDLKTFNVDINTTENLIKYIPQNTTIVSESGIKTPEDIRYLASLGVDAVLIGETFMKIIDDIDKISDFVKEAKGGG.

It belongs to the TrpC family.

The catalysed reaction is 1-(2-carboxyphenylamino)-1-deoxy-D-ribulose 5-phosphate + H(+) = (1S,2R)-1-C-(indol-3-yl)glycerol 3-phosphate + CO2 + H2O. It participates in amino-acid biosynthesis; L-tryptophan biosynthesis; L-tryptophan from chorismate: step 4/5. This is Indole-3-glycerol phosphate synthase from Thermoanaerobacter pseudethanolicus (strain ATCC 33223 / 39E) (Clostridium thermohydrosulfuricum).